Reading from the N-terminus, the 513-residue chain is GMP synthase [glutamine-hydrolyzing] (513 aa).

The Glutamine amidotransferase type-1 domain maps to 3 to 192 (TVVVLDYGSQ…VSKVAKMEKN (190 aa)). Residue cysteine 80 is the Nucleophile of the active site. Active-site residues include histidine 166 and glutamate 168. The 196-residue stretch at 193-388 (WKMTDFIEEK…LGLPDEMINR (196 aa)) folds into the GMPS ATP-PPase domain. 220–226 (SGGVDSS) is an ATP binding site.

Homodimer.

The catalysed reaction is XMP + L-glutamine + ATP + H2O = GMP + L-glutamate + AMP + diphosphate + 2 H(+). It functions in the pathway purine metabolism; GMP biosynthesis; GMP from XMP (L-Gln route): step 1/1. In terms of biological role, catalyzes the synthesis of GMP from XMP. The sequence is that of GMP synthase [glutamine-hydrolyzing] from Thermosipho africanus (strain TCF52B).